A 484-amino-acid polypeptide reads, in one-letter code: Cobyric acid synthase (484 aa).

The GATase cobBQ-type domain occupies 251–438 (ALKIAVPMLP…LHGLFGSDAY (188 aa)). Cysteine 333 serves as the catalytic Nucleophile. Residue histidine 430 is part of the active site.

The protein belongs to the CobB/CobQ family. CobQ subfamily.

The protein operates within cofactor biosynthesis; adenosylcobalamin biosynthesis. Its function is as follows. Catalyzes amidations at positions B, D, E, and G on adenosylcobyrinic A,C-diamide. NH(2) groups are provided by glutamine, and one molecule of ATP is hydrogenolyzed for each amidation. The polypeptide is Cobyric acid synthase (Rhizobium etli (strain ATCC 51251 / DSM 11541 / JCM 21823 / NBRC 15573 / CFN 42)).